A 255-amino-acid polypeptide reads, in one-letter code: D-aminoacyl-tRNA deacylase (255 aa).

Belongs to the DtdA deacylase family. In terms of assembly, monomer. Zn(2+) is required as a cofactor.

It carries out the reaction a D-aminoacyl-tRNA + H2O = a tRNA + a D-alpha-amino acid + H(+). The enzyme catalyses glycyl-tRNA(Ala) + H2O = tRNA(Ala) + glycine + H(+). D-aminoacyl-tRNA deacylase with broad substrate specificity. By recycling D-aminoacyl-tRNA to D-amino acids and free tRNA molecules, this enzyme counteracts the toxicity associated with the formation of D-aminoacyl-tRNA entities in vivo. This Picrophilus torridus (strain ATCC 700027 / DSM 9790 / JCM 10055 / NBRC 100828 / KAW 2/3) protein is D-aminoacyl-tRNA deacylase.